The following is a 142-amino-acid chain: ATP synthase epsilon chain (142 aa).

Belongs to the ATPase epsilon chain family. As to quaternary structure, F-type ATPases have 2 components, CF(1) - the catalytic core - and CF(0) - the membrane proton channel. CF(1) has five subunits: alpha(3), beta(3), gamma(1), delta(1), epsilon(1). CF(0) has three main subunits: a, b and c.

It is found in the cell inner membrane. Produces ATP from ADP in the presence of a proton gradient across the membrane. The polypeptide is ATP synthase epsilon chain (Shewanella sediminis (strain HAW-EB3)).